The primary structure comprises 65 residues: Large ribosomal subunit protein bL33c (65 aa).

The protein belongs to the bacterial ribosomal protein bL33 family.

It localises to the plastid. The protein resides in the chloroplast. This Chaetosphaeridium globosum (Charophycean green alga) protein is Large ribosomal subunit protein bL33c.